Reading from the N-terminus, the 391-residue chain is Putative 1-acyl-sn-glycerol-3-phosphate acyltransferase acl-12 (391 aa).

2 helical membrane-spanning segments follow: residues 47-67 (FFFM…SLLF) and 84-104 (LCAM…ATVT). Positions 124–129 (HLGLLD) match the HXXXXD motif motif.

Belongs to the 1-acyl-sn-glycerol-3-phosphate acyltransferase family.

It localises to the membrane. The enzyme catalyses a 1-acyl-sn-glycero-3-phosphate + an acyl-CoA = a 1,2-diacyl-sn-glycero-3-phosphate + CoA. Its pathway is phospholipid metabolism; CDP-diacylglycerol biosynthesis; CDP-diacylglycerol from sn-glycerol 3-phosphate: step 2/3. Functionally, converts lysophosphatidic acid (LPA) into phosphatidic acid by incorporating an acyl moiety at the sn-2 position of the glycerol backbone. This is Putative 1-acyl-sn-glycerol-3-phosphate acyltransferase acl-12 (acl-12) from Caenorhabditis elegans.